A 154-amino-acid chain; its full sequence is Aspartate carbamoyltransferase regulatory chain (154 aa).

Cys109, Cys114, Cys138, and Cys141 together coordinate Zn(2+).

Belongs to the PyrI family. As to quaternary structure, contains catalytic and regulatory chains. It depends on Zn(2+) as a cofactor.

Functionally, involved in allosteric regulation of aspartate carbamoyltransferase. This is Aspartate carbamoyltransferase regulatory chain from Pectobacterium carotovorum subsp. carotovorum (strain PC1).